The sequence spans 154 residues: SsrA-binding protein (154 aa).

Belongs to the SmpB family.

It localises to the cytoplasm. Required for rescue of stalled ribosomes mediated by trans-translation. Binds to transfer-messenger RNA (tmRNA), required for stable association of tmRNA with ribosomes. tmRNA and SmpB together mimic tRNA shape, replacing the anticodon stem-loop with SmpB. tmRNA is encoded by the ssrA gene; the 2 termini fold to resemble tRNA(Ala) and it encodes a 'tag peptide', a short internal open reading frame. During trans-translation Ala-aminoacylated tmRNA acts like a tRNA, entering the A-site of stalled ribosomes, displacing the stalled mRNA. The ribosome then switches to translate the ORF on the tmRNA; the nascent peptide is terminated with the 'tag peptide' encoded by the tmRNA and targeted for degradation. The ribosome is freed to recommence translation, which seems to be the essential function of trans-translation. The protein is SsrA-binding protein of Enterococcus hirae (strain ATCC 9790 / DSM 20160 / JCM 8729 / LMG 6399 / NBRC 3181 / NCIMB 6459 / NCDO 1258 / NCTC 12367 / WDCM 00089 / R).